Here is a 20-residue protein sequence, read N- to C-terminus: Styelin-A (20 aa).

As to expression, hemocytes and pharyngeal tissues.

The protein localises to the secreted. Functionally, bactericidal against several Gram-positive and Gram-negative bacteria. This Styela clava (Sea squirt) protein is Styelin-A.